The following is a 58-amino-acid chain: Putative calcium channel toxin 196 (58 aa).

The signal sequence occupies residues 1 to 16; the sequence is GSLLLVLFLLSVICYA. Residues 17-26 constitute a propeptide that is removed on maturation; sequence EIAAGPTKCQ. 3 cysteine pairs are disulfide-bonded: Cys-25/Cys-38, Cys-31/Cys-43, and Cys-37/Cys-52.

The protein belongs to the scorpion calcin-like family. KTX subfamily. As to expression, expressed by the venom gland.

The protein localises to the secreted. Functionally, may inhibit voltage-gated potassium channels Kv1.1/KCNA1, hKv1.2/KCNA2, and Kv1.3/KCNA3. May also increase intracellular calcium release through the activation of nuclear inositol 1,4,5-trisphosphate receptors (ITPR) of cardiomyocytes, thereby causing an increase in the contraction frequency of these cells. This chain is Putative calcium channel toxin 196, found in Lychas mucronatus (Chinese swimming scorpion).